The following is a 312-amino-acid chain: Olfactory receptor 51B5 (312 aa).

The Extracellular portion of the chain corresponds to 1–23; the sequence is MSSSGSSHPFLLTGFPGLEEAHH. A helical membrane pass occupies residues 24–44; that stretch reads WISVFFLFMYISILFGNGTLL. Over 45-52 the chain is Cytoplasmic; sequence LLIKEDHN. A helical transmembrane segment spans residues 53 to 73; it reads LHEPMYFFLAMLAATDLGLAL. At 74–97 the chain is on the extracellular side; the sequence is TTMPTVLGVLWLDHREIGSAACFS. Cysteine 95 and cysteine 187 form a disulfide bridge. A helical membrane pass occupies residues 98 to 118; sequence QAYFIHSLSFLESGILLAMAY. Topologically, residues 119–137 are cytoplasmic; that stretch reads DRFIAICNPLRYTSVLTNT. A helical membrane pass occupies residues 138-158; that stretch reads RVVKIGLGVLMRGFVSVVPPI. The Extracellular portion of the chain corresponds to 159 to 194; sequence RPLYFFLYCHSHVLSHAFCLHQDVIKLACADTTFNR. Residues 195-215 traverse the membrane as a helical segment; it reads LYPAVLVVFIFVLDYLIIFIS. At 216-235 the chain is on the cytoplasmic side; that stretch reads YVLILKTVLSIASREERAKA. A helical membrane pass occupies residues 236-256; sequence LITCVSHICCVLVFYVTVIGL. At 257–271 the chain is on the extracellular side; it reads SLIHRFGKQVPHIVH. The helical transmembrane segment at 272–292 threads the bilayer; that stretch reads LIMSYAYFLFPPLMNPITYSV. Residues 293–312 lie on the Cytoplasmic side of the membrane; it reads KTKQIQNAILHLFTTHRIGT.

This sequence belongs to the G-protein coupled receptor 1 family.

Its subcellular location is the cell membrane. Odorant receptor. The chain is Olfactory receptor 51B5 (OR51B5) from Homo sapiens (Human).